Reading from the N-terminus, the 261-residue chain is tRNA (guanine-N(7)-)-methyltransferase (261 aa).

S-adenosyl-L-methionine is bound by residues Glu-75, Glu-100, Asp-127, and Asp-150. Residue Asp-150 is part of the active site. Lys-154 lines the substrate pocket. An interaction with RNA region spans residues 156-161; the sequence is RHNKRR. Substrate-binding positions include Asp-186 and 223–226; that span reads THFE.

Belongs to the class I-like SAM-binding methyltransferase superfamily. TrmB family.

The enzyme catalyses guanosine(46) in tRNA + S-adenosyl-L-methionine = N(7)-methylguanosine(46) in tRNA + S-adenosyl-L-homocysteine. It functions in the pathway tRNA modification; N(7)-methylguanine-tRNA biosynthesis. Catalyzes the formation of N(7)-methylguanine at position 46 (m7G46) in tRNA. The chain is tRNA (guanine-N(7)-)-methyltransferase from Xanthomonas campestris pv. campestris (strain 8004).